Consider the following 345-residue polypeptide: Putative F-box protein At3g17265 (345 aa).

The 46-residue stretch at 1 to 46 (MMFAYLPPDLESEILSRVPATFLKELQTTCKRWYALFRDPIFVKKN) folds into the F-box domain.

The protein is Putative F-box protein At3g17265 of Arabidopsis thaliana (Mouse-ear cress).